The primary structure comprises 334 residues: GTP 3',8-cyclase (334 aa).

A Radical SAM core domain is found at 11-235 (GFNRKVDYLR…VESAESSQGP (225 aa)). R20 lines the GTP pocket. [4Fe-4S] cluster is bound by residues C27 and C31. Y33 lines the S-adenosyl-L-methionine pocket. Position 34 (C34) interacts with [4Fe-4S] cluster. R69 is a binding site for GTP. S-adenosyl-L-methionine is bound at residue G73. A GTP-binding site is contributed by T100. S124 contacts S-adenosyl-L-methionine. K161 contacts GTP. M195 contacts S-adenosyl-L-methionine. Residues C260 and C263 each contribute to the [4Fe-4S] cluster site. 265–267 (RVR) provides a ligand contact to GTP. Position 277 (C277) interacts with [4Fe-4S] cluster.

It belongs to the radical SAM superfamily. MoaA family. Monomer and homodimer. [4Fe-4S] cluster is required as a cofactor.

It carries out the reaction GTP + AH2 + S-adenosyl-L-methionine = (8S)-3',8-cyclo-7,8-dihydroguanosine 5'-triphosphate + 5'-deoxyadenosine + L-methionine + A + H(+). It functions in the pathway cofactor biosynthesis; molybdopterin biosynthesis. Functionally, catalyzes the cyclization of GTP to (8S)-3',8-cyclo-7,8-dihydroguanosine 5'-triphosphate. This chain is GTP 3',8-cyclase, found in Pseudomonas entomophila (strain L48).